A 481-amino-acid chain; its full sequence is Cysteine--tRNA ligase (481 aa).

C29 serves as a coordination point for Zn(2+). The 'HIGH' region motif lies at 31 to 41; that stretch reads VTVYDHCHIGH. The Zn(2+) site is built by C209, H234, and E238. Residues 266-270 carry the 'KMSKS' region motif; that stretch reads KMSKS. An ATP-binding site is contributed by K269.

This sequence belongs to the class-I aminoacyl-tRNA synthetase family. In terms of assembly, monomer. The cofactor is Zn(2+).

It localises to the cytoplasm. It carries out the reaction tRNA(Cys) + L-cysteine + ATP = L-cysteinyl-tRNA(Cys) + AMP + diphosphate. The chain is Cysteine--tRNA ligase from Geobacter sulfurreducens (strain ATCC 51573 / DSM 12127 / PCA).